We begin with the raw amino-acid sequence, 299 residues long: Xyloglucan endotransglucosylase protein 6 (299 aa).

The N-terminal stretch at 1 to 25 (MASSLTLPMAMAFTLLALSFASAMG) is a signal peptide. The 194-residue stretch at 26–219 (GSMNSSRFDE…WSHAPFVASY (194 aa)) folds into the GH16 domain. Glutamate 105 functions as the Nucleophile in the catalytic mechanism. The active-site Proton donor is glutamate 109. Glutamate 109 contributes to the xyloglucan binding site. N-linked (GlcNAc...) asparagine glycosylation occurs at asparagine 113. Xyloglucan contacts are provided by residues 122–124 (QTN), 132–134 (NRE), 198–199 (DW), and glycine 203. Intrachain disulfides connect cysteine 227–cysteine 242 and cysteine 281–cysteine 294. Xyloglucan is bound at residue arginine 286.

This sequence belongs to the glycosyl hydrolase 16 family. XTH group 1 subfamily. Contains at least one intrachain disulfide bond essential for its enzymatic activity. Highest expression in ripe leaves after full expansion. Also expressed in fruits, and at a lower level in flowers and stems (picked at anthesis).

The protein resides in the secreted. Its subcellular location is the cell wall. It localises to the extracellular space. The protein localises to the apoplast. It carries out the reaction breaks a beta-(1-&gt;4) bond in the backbone of a xyloglucan and transfers the xyloglucanyl segment on to O-4 of the non-reducing terminal glucose residue of an acceptor, which can be a xyloglucan or an oligosaccharide of xyloglucan.. In terms of biological role, catalyzes xyloglucan endotransglycosylation (XET). Cleaves and religates xyloglucan polymers. Does not catalyze xyloglucan endohydrolysis (XEH). Probably involved in cell wall restructuring during postharvest fruit softening. This is Xyloglucan endotransglucosylase protein 6 from Diospyros kaki (Kaki persimmon).